The sequence spans 456 residues: Arginine biosynthesis bifunctional protein ArgJ, mitochondrial (456 aa).

6 residues coordinate substrate: Thr184, Lys213, Thr224, Glu311, Asn451, and Thr456. Thr224 acts as the Nucleophile in catalysis.

This sequence belongs to the ArgJ family. Heterodimer of an alpha and a beta chain. In terms of processing, the alpha and beta chains are autoproteolytically processed from a single precursor protein within the mitochondrion.

It is found in the mitochondrion matrix. The enzyme catalyses N(2)-acetyl-L-ornithine + L-glutamate = N-acetyl-L-glutamate + L-ornithine. It catalyses the reaction L-glutamate + acetyl-CoA = N-acetyl-L-glutamate + CoA + H(+). Its pathway is amino-acid biosynthesis; L-arginine biosynthesis; L-ornithine and N-acetyl-L-glutamate from L-glutamate and N(2)-acetyl-L-ornithine (cyclic): step 1/1. The protein operates within amino-acid biosynthesis; L-arginine biosynthesis; N(2)-acetyl-L-ornithine from L-glutamate: step 1/4. In terms of biological role, catalyzes two activities which are involved in the cyclic version of arginine biosynthesis: the synthesis of acetylglutamate from glutamate and acetyl-CoA, and of ornithine by transacetylation between acetylornithine and glutamate. This Aspergillus oryzae (strain ATCC 42149 / RIB 40) (Yellow koji mold) protein is Arginine biosynthesis bifunctional protein ArgJ, mitochondrial.